Reading from the N-terminus, the 144-residue chain is 3-dehydroquinate dehydratase (144 aa).

Tyrosine 22 serves as the catalytic Proton acceptor. The substrate site is built by asparagine 73, histidine 79, and aspartate 86. The active-site Proton donor is histidine 99. Substrate is bound by residues leucine 100–serine 101 and arginine 110.

The protein belongs to the type-II 3-dehydroquinase family. Homododecamer.

The enzyme catalyses 3-dehydroquinate = 3-dehydroshikimate + H2O. It functions in the pathway metabolic intermediate biosynthesis; chorismate biosynthesis; chorismate from D-erythrose 4-phosphate and phosphoenolpyruvate: step 3/7. Its function is as follows. Catalyzes a trans-dehydration via an enolate intermediate. In Geotalea daltonii (strain DSM 22248 / JCM 15807 / FRC-32) (Geobacter daltonii), this protein is 3-dehydroquinate dehydratase.